Here is a 230-residue protein sequence, read N- to C-terminus: Large ribosomal subunit protein uL1 (230 aa).

The protein belongs to the universal ribosomal protein uL1 family. In terms of assembly, part of the 50S ribosomal subunit.

Its function is as follows. Binds directly to 23S rRNA. The L1 stalk is quite mobile in the ribosome, and is involved in E site tRNA release. Protein L1 is also a translational repressor protein, it controls the translation of the L11 operon by binding to its mRNA. This chain is Large ribosomal subunit protein uL1, found in Limosilactobacillus fermentum (strain NBRC 3956 / LMG 18251) (Lactobacillus fermentum).